We begin with the raw amino-acid sequence, 41 residues long: Competence-stimulating peptide type 1 (41 aa).

Residues 1–24 (MKNTVKLEQFVALKEKDLQKIKGG) constitute a propeptide that is removed on maturation.

The protein belongs to the ComC family.

It localises to the secreted. In terms of biological role, acts as a pheromone, induces cells to develop competence for genetic transformation. The sequence is that of Competence-stimulating peptide type 1 (comC1) from Streptococcus pneumoniae.